A 389-amino-acid polypeptide reads, in one-letter code: Chalcone synthase 8 (389 aa).

Residue cysteine 164 is part of the active site.

The protein belongs to the thiolase-like superfamily. Chalcone/stilbene synthases family.

It carries out the reaction (E)-4-coumaroyl-CoA + 3 malonyl-CoA + 3 H(+) = 2',4,4',6'-tetrahydroxychalcone + 3 CO2 + 4 CoA. The protein operates within secondary metabolite biosynthesis; flavonoid biosynthesis. Its function is as follows. The primary product of this enzyme is 4,2',4',6'-tetrahydroxychalcone (also termed naringenin-chalcone or chalcone) which can under specific conditions spontaneously isomerize into naringenin. This Medicago sativa (Alfalfa) protein is Chalcone synthase 8 (CHS8).